Reading from the N-terminus, the 184-residue chain is Jacalin-related lectin 2 (184 aa).

One can recognise a Jacalin-type lectin domain in the interval 4–163 (KIKIGPVGTD…LQNIGVYLQP (160 aa)).

This sequence belongs to the jacalin lectin family.

This is Jacalin-related lectin 2 (JAL2) from Arabidopsis thaliana (Mouse-ear cress).